The following is a 625-amino-acid chain: Probable potassium transport system protein Kup 2 (625 aa).

The next 12 helical transmembrane spans lie at 15–35 (LSFAALGVVFGDIGTSPLYAF), 52–72 (ILSLIFWSLIIIVSIKYLVIV), 98–118 (GGWLLFITLVGIGLIIGDGIL), 134–154 (LSPNLAKYVLPVTLIILFFLF), 164–184 (IGIYFAPVMLIWFITIGVLGF), 203–223 (IYFFMIHKYFALFILGGVFLV), 246–266 (WFAVALPALLLCYFGQGAFVL), 284–304 (FLPVMIILATIATIIASQAII), 336–356 (VYLPLINFILALGTCSLVVIF), 365–385 (AYGIAVNLDMLITTVLVGIIA), 394–414 (FKVMIFPLILVIELAFFAGNI), and 417–437 (LLTGGWIPILIAFLGFVVMYT).

The protein belongs to the HAK/KUP transporter (TC 2.A.72) family.

The protein resides in the cell inner membrane. The catalysed reaction is K(+)(in) + H(+)(in) = K(+)(out) + H(+)(out). In terms of biological role, transport of potassium into the cell. Likely operates as a K(+):H(+) symporter. This chain is Probable potassium transport system protein Kup 2, found in Legionella pneumophila subsp. pneumophila (strain Philadelphia 1 / ATCC 33152 / DSM 7513).